Consider the following 305-residue polypeptide: ATP synthase gamma chain (305 aa).

This sequence belongs to the ATPase gamma chain family. In terms of assembly, F-type ATPases have 2 components, CF(1) - the catalytic core - and CF(0) - the membrane proton channel. CF(1) has five subunits: alpha(3), beta(3), gamma(1), delta(1), epsilon(1). CF(0) has three main subunits: a, b and c.

It is found in the cell membrane. Functionally, produces ATP from ADP in the presence of a proton gradient across the membrane. The gamma chain is believed to be important in regulating ATPase activity and the flow of protons through the CF(0) complex. This is ATP synthase gamma chain from Streptomyces griseus subsp. griseus (strain JCM 4626 / CBS 651.72 / NBRC 13350 / KCC S-0626 / ISP 5235).